Reading from the N-terminus, the 328-residue chain is dITP/XTP pyrophosphatase (328 aa).

The unknown stretch occupies residues 1–129 (MSEKIYEYKD…ATSEQGFGDT (129 aa)). The interval 130 to 324 (ILIATRNEGK…KLMEVFPAWQ (195 aa)) is NTP pyrophosphatase. A substrate-binding site is contributed by 134–139 (TRNEGK). Asp196 serves as the catalytic Proton acceptor. Asp196 provides a ligand contact to Mg(2+). Substrate-binding positions include Ser197, 280 to 283 (FGYD), Lys303, and 308 to 309 (HR).

This sequence belongs to the HAM1 NTPase family. In terms of assembly, homodimer. Mg(2+) serves as cofactor.

It catalyses the reaction XTP + H2O = XMP + diphosphate + H(+). It carries out the reaction dITP + H2O = dIMP + diphosphate + H(+). The enzyme catalyses ITP + H2O = IMP + diphosphate + H(+). Pyrophosphatase that catalyzes the hydrolysis of nucleoside triphosphates to their monophosphate derivatives, with a high preference for the non-canonical purine nucleotides XTP (xanthosine triphosphate), dITP (deoxyinosine triphosphate) and ITP. Seems to function as a house-cleaning enzyme that removes non-canonical purine nucleotides from the nucleotide pool, thus preventing their incorporation into DNA/RNA and avoiding chromosomal lesions. This chain is dITP/XTP pyrophosphatase, found in Streptococcus pyogenes serotype M18 (strain MGAS8232).